Reading from the N-terminus, the 761-residue chain is Elongation factor G, mitochondrial (761 aa).

A mitochondrion-targeting transit peptide spans 1 to 42 (MSVQKMMWVPRKMVGGRIPFFTCSKVFSGFSRRSFHESPLAR). In terms of domain architecture, tr-type G spans 68 to 349 (NKLRNIGISA…AIVDYLPNPS (282 aa)). GTP-binding positions include 77 to 84 (AHIDSGKT), 148 to 152 (DTPGH), and 202 to 205 (NKMD).

Belongs to the TRAFAC class translation factor GTPase superfamily. Classic translation factor GTPase family. EF-G/EF-2 subfamily. The precursor is processed in two steps involving mitochondrial intermediate peptidase (MIP) and mitochondrial processing peptidase (MPP).

It is found in the mitochondrion. It participates in protein biosynthesis; polypeptide chain elongation. Mitochondrial GTPase that catalyzes the GTP-dependent ribosomal translocation step during translation elongation. During this step, the ribosome changes from the pre-translocational (PRE) to the post-translocational (POST) state as the newly formed A-site-bound peptidyl-tRNA and P-site-bound deacylated tRNA move to the P and E sites, respectively. Catalyzes the coordinated movement of the two tRNA molecules, the mRNA and conformational changes in the ribosome. This is Elongation factor G, mitochondrial from Saccharomyces cerevisiae (strain ATCC 204508 / S288c) (Baker's yeast).